Reading from the N-terminus, the 219-residue chain is MVDLKTKAFDISQNFTISLDGPAASGKGTIGLILAKKFSLKYFQSSIVYRQLAFDCISQKIDVTDIDAVIALSKELKLDNNFDLENENIGNIASQIAVISEIRNNLNKYLISLVKTTPRMIMEGRDIGTVVAPDADLKIFITANPQIRAERRYKQLQAKGKTCILDEILRQIILRDKRDKERKAAPLLPASDALIIDTSKLSAMEVVEEVTNYIKNKIT.

Gly21–Thr29 is an ATP binding site.

The protein belongs to the cytidylate kinase family. Type 1 subfamily.

The protein localises to the cytoplasm. It carries out the reaction CMP + ATP = CDP + ADP. The enzyme catalyses dCMP + ATP = dCDP + ADP. The protein is Cytidylate kinase of Rickettsia conorii (strain ATCC VR-613 / Malish 7).